A 153-amino-acid polypeptide reads, in one-letter code: SsrA-binding protein (153 aa).

The tract at residues 129-153 (KREDMKKKDQSREMAQALRERSKSH) is disordered.

Belongs to the SmpB family.

The protein resides in the cytoplasm. Required for rescue of stalled ribosomes mediated by trans-translation. Binds to transfer-messenger RNA (tmRNA), required for stable association of tmRNA with ribosomes. tmRNA and SmpB together mimic tRNA shape, replacing the anticodon stem-loop with SmpB. tmRNA is encoded by the ssrA gene; the 2 termini fold to resemble tRNA(Ala) and it encodes a 'tag peptide', a short internal open reading frame. During trans-translation Ala-aminoacylated tmRNA acts like a tRNA, entering the A-site of stalled ribosomes, displacing the stalled mRNA. The ribosome then switches to translate the ORF on the tmRNA; the nascent peptide is terminated with the 'tag peptide' encoded by the tmRNA and targeted for degradation. The ribosome is freed to recommence translation, which seems to be the essential function of trans-translation. This chain is SsrA-binding protein, found in Geobacter metallireducens (strain ATCC 53774 / DSM 7210 / GS-15).